The sequence spans 483 residues: Argininosuccinate lyase (483 aa).

Belongs to the lyase 1 family. Argininosuccinate lyase subfamily.

It localises to the cytoplasm. It carries out the reaction 2-(N(omega)-L-arginino)succinate = fumarate + L-arginine. Its pathway is amino-acid biosynthesis; L-arginine biosynthesis; L-arginine from L-ornithine and carbamoyl phosphate: step 3/3. This chain is Argininosuccinate lyase, found in Archaeoglobus fulgidus (strain ATCC 49558 / DSM 4304 / JCM 9628 / NBRC 100126 / VC-16).